The sequence spans 556 residues: 2-succinyl-5-enolpyruvyl-6-hydroxy-3-cyclohexene-1-carboxylate synthase (556 aa).

The protein belongs to the TPP enzyme family. MenD subfamily. In terms of assembly, homodimer. It depends on Mg(2+) as a cofactor. Mn(2+) serves as cofactor. Thiamine diphosphate is required as a cofactor.

The enzyme catalyses isochorismate + 2-oxoglutarate + H(+) = 5-enolpyruvoyl-6-hydroxy-2-succinyl-cyclohex-3-ene-1-carboxylate + CO2. Its pathway is quinol/quinone metabolism; 1,4-dihydroxy-2-naphthoate biosynthesis; 1,4-dihydroxy-2-naphthoate from chorismate: step 2/7. It functions in the pathway quinol/quinone metabolism; menaquinone biosynthesis. In terms of biological role, catalyzes the thiamine diphosphate-dependent decarboxylation of 2-oxoglutarate and the subsequent addition of the resulting succinic semialdehyde-thiamine pyrophosphate anion to isochorismate to yield 2-succinyl-5-enolpyruvyl-6-hydroxy-3-cyclohexene-1-carboxylate (SEPHCHC). This chain is 2-succinyl-5-enolpyruvyl-6-hydroxy-3-cyclohexene-1-carboxylate synthase, found in Salmonella paratyphi B (strain ATCC BAA-1250 / SPB7).